The primary structure comprises 356 residues: Peptide methionine sulfoxide reductase MsrA/MsrB (356 aa).

Residues 46–199 are peptide methionine sulfoxide reductase A; that stretch reads HEIYLAGGCF…PNGYCHIDLE (154 aa). C54 is an active-site residue. Positions 216–339 constitute a MsrB domain; it reads DAELKAKLTP…NSAAVKFIPL (124 aa). C328 (nucleophile) is an active-site residue.

It in the N-terminal section; belongs to the MsrA Met sulfoxide reductase family. In the C-terminal section; belongs to the MsrB Met sulfoxide reductase family.

It catalyses the reaction L-methionyl-[protein] + [thioredoxin]-disulfide + H2O = L-methionyl-(S)-S-oxide-[protein] + [thioredoxin]-dithiol. It carries out the reaction [thioredoxin]-disulfide + L-methionine + H2O = L-methionine (S)-S-oxide + [thioredoxin]-dithiol. The enzyme catalyses L-methionyl-[protein] + [thioredoxin]-disulfide + H2O = L-methionyl-(R)-S-oxide-[protein] + [thioredoxin]-dithiol. Has an important function as a repair enzyme for proteins that have been inactivated by oxidation. Catalyzes the reversible oxidation-reduction of methionine sulfoxide in proteins to methionine. This chain is Peptide methionine sulfoxide reductase MsrA/MsrB (msrAB), found in Aggregatibacter actinomycetemcomitans (Actinobacillus actinomycetemcomitans).